Reading from the N-terminus, the 216-residue chain is Serine/threonine-protein phosphatase 1 (216 aa).

D24, H26, D53, and N79 together coordinate Mn(2+). H80 acts as the Proton donor in catalysis. H185 lines the Mn(2+) pocket.

It belongs to the PPP phosphatase family. PP-1 subfamily. It depends on Mn(2+) as a cofactor.

It carries out the reaction O-phospho-L-seryl-[protein] + H2O = L-seryl-[protein] + phosphate. The enzyme catalyses O-phospho-L-threonyl-[protein] + H2O = L-threonyl-[protein] + phosphate. Inhibited by cadmium, copper, zinc when added cobalt when added concomitantly with manganese. In terms of biological role, can hydrolyze phosphorylated Ser-, Thr- or Tyr-substrates in vitro. The natural substrate is unknown. This Salmonella typhimurium (strain LT2 / SGSC1412 / ATCC 700720) protein is Serine/threonine-protein phosphatase 1 (pphA).